Here is a 166-residue protein sequence, read N- to C-terminus: Endoribonuclease YbeY (166 aa).

Zn(2+) contacts are provided by His-132, His-136, and His-142.

This sequence belongs to the endoribonuclease YbeY family. It depends on Zn(2+) as a cofactor.

Its subcellular location is the cytoplasm. Its function is as follows. Single strand-specific metallo-endoribonuclease involved in late-stage 70S ribosome quality control and in maturation of the 3' terminus of the 16S rRNA. The sequence is that of Endoribonuclease YbeY from Clostridium botulinum (strain Loch Maree / Type A3).